Reading from the N-terminus, the 218-residue chain is Large ribosomal subunit protein uL3 (218 aa).

A disordered region spans residues 132–152 (FKGQGASHGTQAVHRRPGSIG).

It belongs to the universal ribosomal protein uL3 family. Part of the 50S ribosomal subunit. Forms a cluster with proteins L14 and L19.

Its function is as follows. One of the primary rRNA binding proteins, it binds directly near the 3'-end of the 23S rRNA, where it nucleates assembly of the 50S subunit. The protein is Large ribosomal subunit protein uL3 of Rhodococcus erythropolis (strain PR4 / NBRC 100887).